The sequence spans 428 residues: MLYKRSSQLFAEAEKVIPGGVNSPVRAFKAVGGTPIFVKSAKGAYLYDEDGNKLIDYINSWGPMVLGHAYQPVVDAVIEKAKLGTSFGMPTELETEIAALAVSMVPNIDKIRFVNSGTEACMSAIRLARGFTKRDKIIKFAGCYHGHSDSFLIQAGSGAVTFGSPNSPGVTEGTAKDTLLAKYNDLENVKTLIEANKGEIAAIIIEAVAGNMGCIPPAEGFLQGLRDLCTANGILLIFDEVMTGFRLARGGVQELYGIDADIVTFGKVIGGGLPVGAFAAREEIMNYLAPLGPVYQAGTLSGNPLAMAAGYAMLKALDNDREIFTRLEEKTAYLEAGIDRVLKANNVVFTINRVGSMISVHFDAGPVTDFKTAAKGDNETFKKFFHGLLQEGVYIAPSAYETWFITDALTYEDLDFTINAIDKVSKTF.

N6-(pyridoxal phosphate)lysine is present on lysine 267.

This sequence belongs to the class-III pyridoxal-phosphate-dependent aminotransferase family. HemL subfamily. In terms of assembly, homodimer. Pyridoxal 5'-phosphate serves as cofactor.

Its subcellular location is the cytoplasm. The enzyme catalyses (S)-4-amino-5-oxopentanoate = 5-aminolevulinate. It participates in porphyrin-containing compound metabolism; protoporphyrin-IX biosynthesis; 5-aminolevulinate from L-glutamyl-tRNA(Glu): step 2/2. This Flavobacterium johnsoniae (strain ATCC 17061 / DSM 2064 / JCM 8514 / BCRC 14874 / CCUG 350202 / NBRC 14942 / NCIMB 11054 / UW101) (Cytophaga johnsonae) protein is Glutamate-1-semialdehyde 2,1-aminomutase.